The following is a 249-amino-acid chain: Chitooligosaccharide deacetylase (249 aa).

Positions 61 and 125 each coordinate Mg(2+).

It belongs to the YdjC deacetylase family. ChbG subfamily. As to quaternary structure, homodimer. Mg(2+) is required as a cofactor.

Its subcellular location is the cytoplasm. It catalyses the reaction N,N'-diacetylchitobiose + H2O = N-acetyl-beta-D-glucosaminyl-(1-&gt;4)-D-glucosamine + acetate. It carries out the reaction diacetylchitobiose-6'-phosphate + H2O = N'-monoacetylchitobiose-6'-phosphate + acetate. Its pathway is glycan degradation; chitin degradation. Involved in the degradation of chitin. ChbG is essential for growth on the acetylated chitooligosaccharides chitobiose and chitotriose but is dispensable for growth on cellobiose and chitosan dimer, the deacetylated form of chitobiose. Deacetylation of chitobiose-6-P and chitotriose-6-P is necessary for both the activation of the chb promoter by the regulatory protein ChbR and the hydrolysis of phosphorylated beta-glucosides by the phospho-beta-glucosidase ChbF. Catalyzes the removal of only one acetyl group from chitobiose-6-P to yield monoacetylchitobiose-6-P, the inducer of ChbR and the substrate of ChbF. The polypeptide is Chitooligosaccharide deacetylase (Escherichia coli (strain K12 / MC4100 / BW2952)).